The sequence spans 266 residues: Glucosamine-6-phosphate deaminase (266 aa).

Aspartate 72 serves as the catalytic Proton acceptor; for enolization step. The For ring-opening step role is filled by aspartate 141. The Proton acceptor; for ring-opening step role is filled by histidine 143. Residue glutamate 148 is the For ring-opening step of the active site.

It belongs to the glucosamine/galactosamine-6-phosphate isomerase family. NagB subfamily. Homohexamer.

It catalyses the reaction alpha-D-glucosamine 6-phosphate + H2O = beta-D-fructose 6-phosphate + NH4(+). Its pathway is amino-sugar metabolism; N-acetylneuraminate degradation; D-fructose 6-phosphate from N-acetylneuraminate: step 5/5. Its activity is regulated as follows. Allosterically activated by N-acetylglucosamine 6-phosphate (GlcNAc6P). Functionally, catalyzes the reversible isomerization-deamination of glucosamine 6-phosphate (GlcN6P) to form fructose 6-phosphate (Fru6P) and ammonium ion. This Vibrio cholerae serotype O1 (strain ATCC 39541 / Classical Ogawa 395 / O395) protein is Glucosamine-6-phosphate deaminase.